Consider the following 527-residue polypeptide: Serine/threonine-protein kinase NLK (527 aa).

Sufficient for interaction with DAPK3 regions lie at residues 1–125 and 124–416; these read MSLC…KAHH and HHHQ…SKRI. Required for interaction with TAB2 regions lie at residues 1-304 and 434-527; these read MSLC…VVTQ and YHTC…LVWE. Disordered regions lie at residues 22-72 and 90-140; these read AAAA…SSAA and QQPY…DIEP. Residues 26–54 are compositionally biased toward basic residues; the sequence is GHHHHHHHHLPHLPPPHLHHHHHPQHHLH. Over residues 103-119 the composition is skewed to low complexity; the sequence is PGPAAAAPAQVQAAAAA. Residues 122–131 are compositionally biased toward basic residues; the sequence is KAHHHQHSHH. Positions 138 to 427 constitute a Protein kinase domain; that stretch reads IEPDRPIGYG…AKDALAHPYL (290 aa). ATP contacts are provided by residues 144–152 and K167; that span reads IGYGAFGVV. D264 functions as the Proton acceptor in the catalytic mechanism. T298 is subject to Phosphothreonine; by autocatalysis. The TQE motif lies at 298–300; it reads TQE. A required for homodimerization and kinase activation and localization to the nucleus region spans residues 428–527; that stretch reads DEGRLRYHTC…EMPPSPLVWE (100 aa). A Phosphoserine modification is found at S522.

It belongs to the protein kinase superfamily. CMGC Ser/Thr protein kinase family. MAP kinase subfamily. In terms of assembly, homodimer. Homodimerization is required for intermolecular autophosphorylation, kinase activation and nuclear localization. May interact with components of cullin-RING-based SCF (SKP1-CUL1-F-box protein) E3 ubiquitin-protein ligase complexes. Interacts with LEF1, MEF2A, MYBL1 and MYBL2. Interacts with the upstream activating kinases HIPK2 and MAP3K7/TAK1. Interaction with MAP3K7/TAK1 seems to be indirect, and may be mediated by other proteins such as STAT3, TAB1 and TAB2. Interacts with and phosphorylates a number of transcription factors including FOXO1, FOXO3, FOXO4, MYB, NOTCH1 and TCF7L2/TCF4. Interacts with DAPK3/ZIPK, and this interaction may disrupt interaction with transcription factors such as TCF7L2/TCF4. Interacts with RNF138/NARF. Interacts with ATF5; the interaction stabilizes ATF5 at the protein level in a kinase-independent manner. Requires Mg(2+) as cofactor. In terms of processing, phosphorylated on Thr-298. Intermolecular autophosphorylation on Thr-298 activates the enzyme.

Its subcellular location is the nucleus. It localises to the cytoplasm. It catalyses the reaction L-seryl-[protein] + ATP = O-phospho-L-seryl-[protein] + ADP + H(+). The enzyme catalyses L-threonyl-[protein] + ATP = O-phospho-L-threonyl-[protein] + ADP + H(+). With respect to regulation, activated by dimerization and subsequent intermolecular autophosphorylation on Thr-298. Activated by the non-canonical Wnt signaling pathway, in which WNT5A treatment leads to activation of MAP3K7/TAK1 and HIPK2, which subsequently phosphorylates and activates this protein. Other cytokines such as IL6 may also activate this regulatory circuit. In terms of biological role, serine/threonine-protein kinase that regulates a number of transcription factors with key roles in cell fate determination. Positive effector of the non-canonical Wnt signaling pathway, acting downstream of WNT5A, MAP3K7/TAK1 and HIPK2. Negative regulator of the canonical Wnt/beta-catenin signaling pathway. Binds to and phosphorylates TCF7L2/TCF4 and LEF1, promoting the dissociation of the TCF7L2/LEF1/beta-catenin complex from DNA, as well as the ubiquitination and subsequent proteolysis of LEF1. Together these effects inhibit the transcriptional activation of canonical Wnt/beta-catenin target genes. Negative regulator of the Notch signaling pathway. Binds to and phosphorylates NOTCH1, thereby preventing the formation of a transcriptionally active ternary complex of NOTCH1, RBPJ/RBPSUH and MAML1. Negative regulator of the MYB family of transcription factors. Phosphorylation of MYB leads to its subsequent proteolysis while phosphorylation of MYBL1 and MYBL2 inhibits their interaction with the coactivator CREBBP. Other transcription factors may also be inhibited by direct phosphorylation of CREBBP itself. Acts downstream of IL6 and MAP3K7/TAK1 to phosphorylate STAT3, which is in turn required for activation of NLK by MAP3K7/TAK1. Upon IL1B stimulus, cooperates with ATF5 to activate the transactivation activity of C/EBP subfamily members. Phosphorylates ATF5 but also stabilizes ATF5 protein levels in a kinase-independent manner. Acts as an inhibitor of the mTORC1 complex in response to osmotic stress by mediating phosphorylation of RPTOR, thereby preventing recruitment of the mTORC1 complex to lysosomes. The protein is Serine/threonine-protein kinase NLK (NLK) of Homo sapiens (Human).